The chain runs to 314 residues: tRNA pseudouridine synthase B (314 aa).

Residue His-43 coordinates substrate. The active-site Nucleophile is the Asp-48. Residues Tyr-76, Tyr-179, and Leu-200 each contribute to the substrate site.

Belongs to the pseudouridine synthase TruB family. Type 1 subfamily.

The enzyme catalyses uridine(55) in tRNA = pseudouridine(55) in tRNA. Responsible for synthesis of pseudouridine from uracil-55 in the psi GC loop of transfer RNAs. The sequence is that of tRNA pseudouridine synthase B from Serratia proteamaculans (strain 568).